The primary structure comprises 248 residues: 5'-nucleotidase SurE (248 aa).

A divalent metal cation contacts are provided by D8, D9, S39, and N91.

The protein belongs to the SurE nucleotidase family. A divalent metal cation is required as a cofactor.

The protein localises to the cytoplasm. The enzyme catalyses a ribonucleoside 5'-phosphate + H2O = a ribonucleoside + phosphate. Its function is as follows. Nucleotidase that shows phosphatase activity on nucleoside 5'-monophosphates. The protein is 5'-nucleotidase SurE of Neisseria meningitidis serogroup C (strain 053442).